A 152-amino-acid polypeptide reads, in one-letter code: 6,7-dimethyl-8-ribityllumazine synthase (152 aa).

5-amino-6-(D-ribitylamino)uracil is bound by residues Phe-22, 56–58, and 79–81; these read AFE and AVI. 84–85 provides a ligand contact to (2S)-2-hydroxy-3-oxobutyl phosphate; sequence AT. His-87 (proton donor) is an active-site residue. A 5-amino-6-(D-ribitylamino)uracil-binding site is contributed by Phe-112. (2S)-2-hydroxy-3-oxobutyl phosphate is bound at residue Arg-126.

It belongs to the DMRL synthase family.

It carries out the reaction (2S)-2-hydroxy-3-oxobutyl phosphate + 5-amino-6-(D-ribitylamino)uracil = 6,7-dimethyl-8-(1-D-ribityl)lumazine + phosphate + 2 H2O + H(+). The protein operates within cofactor biosynthesis; riboflavin biosynthesis; riboflavin from 2-hydroxy-3-oxobutyl phosphate and 5-amino-6-(D-ribitylamino)uracil: step 1/2. Functionally, catalyzes the formation of 6,7-dimethyl-8-ribityllumazine by condensation of 5-amino-6-(D-ribitylamino)uracil with 3,4-dihydroxy-2-butanone 4-phosphate. This is the penultimate step in the biosynthesis of riboflavin. This Carboxydothermus hydrogenoformans (strain ATCC BAA-161 / DSM 6008 / Z-2901) protein is 6,7-dimethyl-8-ribityllumazine synthase.